Consider the following 69-residue polypeptide: Putative membrane protein insertion efficiency factor (69 aa).

The protein belongs to the UPF0161 family.

It localises to the cell inner membrane. Could be involved in insertion of integral membrane proteins into the membrane. The chain is Putative membrane protein insertion efficiency factor from Dechloromonas aromatica (strain RCB).